Reading from the N-terminus, the 120-residue chain is Glycine cleavage system H protein (120 aa).

Residues 17–99 (IATVGITSHA…QGAGWLYRMR (83 aa)) enclose the Lipoyl-binding domain. Residue K58 is modified to N6-lipoyllysine.

Belongs to the GcvH family. In terms of assembly, the glycine cleavage system is composed of four proteins: P, T, L and H. It depends on (R)-lipoate as a cofactor.

The glycine cleavage system catalyzes the degradation of glycine. The H protein shuttles the methylamine group of glycine from the P protein to the T protein. In Methylobacterium nodulans (strain LMG 21967 / CNCM I-2342 / ORS 2060), this protein is Glycine cleavage system H protein.